A 365-amino-acid chain; its full sequence is Alanine racemase (365 aa).

Lys32 serves as the catalytic Proton acceptor; specific for D-alanine. Lys32 carries the N6-(pyridoxal phosphate)lysine modification. A substrate-binding site is contributed by Arg128. Tyr257 acts as the Proton acceptor; specific for L-alanine in catalysis. Position 305 (Met305) interacts with substrate.

The protein belongs to the alanine racemase family. It depends on pyridoxal 5'-phosphate as a cofactor.

The catalysed reaction is L-alanine = D-alanine. It participates in amino-acid biosynthesis; D-alanine biosynthesis; D-alanine from L-alanine: step 1/1. In terms of biological role, catalyzes the interconversion of L-alanine and D-alanine. May also act on other amino acids. The chain is Alanine racemase (alr) from Francisella tularensis subsp. holarctica (strain FTNF002-00 / FTA).